A 338-amino-acid polypeptide reads, in one-letter code: 3-keto-steroid reductase erg27 (338 aa).

The NADP(+) site is built by Leu16, Thr44, Lys50, and Asp75. Active-site proton donor residues include Ser180 and Tyr203. Residues Tyr203, Lys207, and Thr236 each contribute to the NADP(+) site. The active-site Lowers pKa of active site Tyr is Lys207.

Belongs to the short-chain dehydrogenases/reductases (SDR) family. ERG27 subfamily. In terms of assembly, heterotetramer of erg25, erg26, erg27 and erg28. Erg28 acts as a scaffold to tether erg27 and other 4,4-demethylation-related enzymes, forming a demethylation enzyme complex, in the endoplasmic reticulum.

It catalyses the reaction 3-dehydro-4alpha-methylzymosterol + NADPH + H(+) = 4alpha-methylzymosterol + NADP(+). The protein operates within steroid biosynthesis; zymosterol biosynthesis; zymosterol from lanosterol: step 5/6. It participates in steroid metabolism; ergosterol biosynthesis. In terms of biological role, 3-keto-steroid reductase; part of the third module of ergosterol biosynthesis pathway that includes by the late steps of the pathway. Erg27 is a catalytic component of the C-4 demethylation complex that catalyze the reduction of the keto group on the C-3. The third module or late pathway involves the ergosterol synthesis itself through consecutive reactions that mainly occur in the endoplasmic reticulum (ER) membrane. Firstly, the squalene synthase erg9 catalyzes the condensation of 2 farnesyl pyrophosphate moieties to form squalene, which is the precursor of all steroids. Secondly, squalene is converted into lanosterol by the consecutive action of the squalene epoxidase erg1 and the lanosterol synthase erg7. The lanosterol 14-alpha-demethylase erg11/cyp1 catalyzes C14-demethylation of lanosterol to produce 4,4'-dimethyl cholesta-8,14,24-triene-3-beta-ol. In the next steps, a complex process involving various demethylation, reduction and desaturation reactions catalyzed by the C-14 reductase erg24 and the C-4 demethylation complex erg25-erg26-erg27 leads to the production of zymosterol. Erg28 likely functions in the C-4 demethylation complex reaction by tethering erg26 and Erg27 to the endoplasmic reticulum or to facilitate interaction between these proteins. Then, the sterol 24-C-methyltransferase erg6 catalyzes the methyl transfer from S-adenosyl-methionine to the C-24 of zymosterol to form fecosterol. The C-8 sterol isomerase erg2 catalyzes the reaction which results in unsaturation at C-7 in the B ring of sterols and thus converts fecosterol to episterol. The sterol-C5-desaturases erg31 and erg32 then catalyze the introduction of a C-5 double bond in the B ring to produce 5-dehydroepisterol. The C-22 sterol desaturase erg5 further converts 5-dehydroepisterol into ergosta-5,7,22,24(28)-tetraen-3beta-ol by forming the C-22(23) double bond in the sterol side chain. Finally, ergosta-5,7,22,24(28)-tetraen-3beta-ol is substrate of the C-24(28) sterol reductase erg4 to produce ergosterol. In the genus Schizosaccharomyces, a second route exists between lanosterol and fecosterol, via the methylation of lanosterol to eburicol by erg6, followed by C14-demethylation by erg11/cyp1 and C4-demethylation by the demethylation complex erg25-erg26-erg27. The polypeptide is 3-keto-steroid reductase erg27 (Schizosaccharomyces pombe (strain 972 / ATCC 24843) (Fission yeast)).